A 537-amino-acid polypeptide reads, in one-letter code: Tegument protein BRRF2 (537 aa).

Disordered stretches follow at residues 325 to 474 and 486 to 537; these read LALP…EAQD and GLRV…LSVI. Residues 334-347 are compositionally biased toward polar residues; that stretch reads KPQQTCSQLTSRGN. Over residues 423–441 the composition is skewed to low complexity; it reads SSQAAPSSSSVAPVASLSG. A compositionally biased stretch (acidic residues) spans 492 to 517; sequence DEDEDGSEDGEFSDLDLSDSDHEGDE.

Belongs to the lymphocryptovirus BRRF2 family.

The protein localises to the virion tegument. In Homo sapiens (Human), this protein is Tegument protein BRRF2.